A 340-amino-acid polypeptide reads, in one-letter code: Glyceraldehyde-3-phosphate dehydrogenase (340 aa).

Residues 11–12 (SI) and G111 contribute to the NAD(+) site. 140–142 (SCN) serves as a coordination point for D-glyceraldehyde 3-phosphate. C141 acts as the Nucleophile in catalysis. R169 is an NAD(+) binding site. Residue 195 to 196 (HG) coordinates D-glyceraldehyde 3-phosphate. NAD(+) is bound at residue Q303.

Belongs to the glyceraldehyde-3-phosphate dehydrogenase family. Homotetramer.

The protein localises to the cytoplasm. It carries out the reaction D-glyceraldehyde 3-phosphate + phosphate + NADP(+) = (2R)-3-phospho-glyceroyl phosphate + NADPH + H(+). The catalysed reaction is D-glyceraldehyde 3-phosphate + phosphate + NAD(+) = (2R)-3-phospho-glyceroyl phosphate + NADH + H(+). It functions in the pathway carbohydrate degradation; glycolysis; pyruvate from D-glyceraldehyde 3-phosphate: step 1/5. This is Glyceraldehyde-3-phosphate dehydrogenase from Methanococcus maripaludis (strain C5 / ATCC BAA-1333).